Here is a 231-residue protein sequence, read N- to C-terminus: Nitrate reductase [NAD(P)H] (231 aa).

Positions 1–85 constitute an FAD-binding FR-type domain; sequence PQKLGLPVGR…KGPHRHIEYT (85 aa). Residues 25 to 28, 42 to 46, Phe47, 59 to 61, and Thr112 contribute to the FAD site; these read RAYT, LIKIY, and LMS.

The protein belongs to the nitrate reductase family. Homodimer. Requires FAD as cofactor. Heme serves as cofactor. Mo-molybdopterin is required as a cofactor.

The enzyme catalyses nitrite + NAD(+) + H2O = nitrate + NADH + H(+). The catalysed reaction is nitrite + NADP(+) + H2O = nitrate + NADPH + H(+). Nitrate reductase is a key enzyme involved in the first step of nitrate assimilation in plants, fungi and bacteria. The sequence is that of Nitrate reductase [NAD(P)H] (NAR) from Zea mays (Maize).